The sequence spans 256 residues: Nuclear shuttle protein (256 aa).

The span at 1 to 16 shows a compositional bias: polar residues; it reads MYSTSNRRGRSQTQRG. A disordered region spans residues 1–46; sequence MYSTSNRRGRSQTQRGSHVRRTGVKRSYGAARGDDRRRPNVVSKTQ. The Bipartite nuclear localization signal motif lies at 21–42; sequence RTGVKRSYGAARGDDRRRPNVV. The short motif at 81 to 96 is the Nuclear localization signal element; it reads SYVKTVPNRTRTYIKL. An interaction with Arabidopsis thaliana NSI protein region spans residues 150 to 187; the sequence is ELFGARIHCHGNLSVVPALKDRYYIRHVTKRVVSLEKD. Positions 177 to 198 match the Nuclear export signal motif; sequence VTKRVVSLEKDTLLIDLHGTTQ.

Belongs to the begomovirus nuclear shuttle protein family. In terms of assembly, binds to single-stranded and double-stranded viral DNA. Interacts with the host nuclear shuttle interacting (NSI) protein. This interaction may allow NSP to recruit NSI monomers to the viral genome and thus regulate nuclear export of viral genome by NSP.

Its subcellular location is the host nucleus. It localises to the host cytoplasm. It is found in the host cell membrane. Its function is as follows. Binds to the genomic viral ssDNA, shuttles it into and out of the cell nucleus. Begomoviruses use 2 proteins to transport their DNA from cell to cell. The nuclear shuttle protein (NSP) shuttles it between nucleus and cytoplasm and the movement protein (MP) probably transports the DNA-NSP complex to the cell periphery and facilitates movement across the cell wall. In Squash leaf curl virus (SLCV), this protein is Nuclear shuttle protein.